Reading from the N-terminus, the 1166-residue chain is Tectonin beta-propeller repeat-containing protein 1 (1166 aa).

4 TECPR repeats span residues 209 to 240 (LSVW…SLVE), 254 to 285 (DLIW…SMVE), 301 to 332 (SVVW…IEMV), and 344 to 376 (DQVW…KAIV). Phosphoserine occurs at positions 386, 388, 391, 413, and 418. The disordered stretch occupies residues 404 to 496 (RGSGTESAPS…PAELPWTNID (93 aa)). Positions 407 to 416 (GTESAPSDTD) are enriched in polar residues. Positions 451 to 462 (TSGNTDHSTENA) are enriched in polar residues. The span at 466 to 481 (EGKEKAPETSRSDECR) shows a compositional bias: basic and acidic residues. One can recognise a PH domain in the interval 616–722 (KTGALQWWCD…WLALLSLSCC (107 aa)). One copy of the TECPR 5 repeat lies at 734–761 (QAIWSVTCKGDIFVSEPSPDLEARERLL). The residue at position 943 (serine 943) is a Phosphoserine. 4 TECPR repeats span residues 958–989 (VALW…LHVG), 1003–1034 (YQVW…YHIP), 1049–1080 (TSVY…EHVS), and 1092–1132 (DQVW…DYGI).

It belongs to the TECPR1 family. In terms of assembly, interacts with ATG5; the interaction is direct. Interacts with WIPI2. Interacts with the ATG5-ATG12 conjugate, the interaction is however mutually exclusive with ATG16, since it does not interact with ATG12-ATG5-ATG16 complex.

The protein resides in the cytoplasmic vesicle. It localises to the autophagosome membrane. Its subcellular location is the lysosome membrane. Tethering factor involved in autophagy. Involved in autophagosome maturation by promoting the autophagosome fusion with lysosomes: acts by associating with both the ATG5-ATG12 conjugate and phosphatidylinositol-3-phosphate (PtdIns(3)P) present at the surface of autophagosomes. Also involved in selective autophagy against bacterial pathogens, by being required for phagophore/preautophagosomal structure biogenesis and maturation. The sequence is that of Tectonin beta-propeller repeat-containing protein 1 (Tecpr1) from Mus musculus (Mouse).